Here is a 414-residue protein sequence, read N- to C-terminus: 2,3-diketo-5-methylthiopentyl-1-phosphate enolase (414 aa).

Lys99 acts as the Proton acceptor in catalysis. Substrate is bound by residues Lys148, 174 to 177 (KDDE), His265, Gly338, and 360 to 361 (GG). Mg(2+) contacts are provided by Lys174, Asp176, and Glu177. Lys174 bears the N6-carboxylysine mark.

It belongs to the RuBisCO large chain family. Type IV subfamily. As to quaternary structure, homodimer. Mg(2+) is required as a cofactor.

The enzyme catalyses 5-methylsulfanyl-2,3-dioxopentyl phosphate = 2-hydroxy-5-methylsulfanyl-3-oxopent-1-enyl phosphate. It functions in the pathway amino-acid biosynthesis; L-methionine biosynthesis via salvage pathway; L-methionine from S-methyl-5-thio-alpha-D-ribose 1-phosphate: step 3/6. Catalyzes the enolization of 2,3-diketo-5-methylthiopentyl-1-phosphate (DK-MTP-1-P) into 2-hydroxy-3-keto-5-methylthiopentenyl-1-phosphate (HK-MTPenyl-1-P). This chain is 2,3-diketo-5-methylthiopentyl-1-phosphate enolase, found in Bacillus cereus (strain AH820).